The chain runs to 988 residues: Ubiquitin carboxyl-terminal hydrolase 36 (988 aa).

The segment at 16–55 is disordered; that stretch reads PTLRTDNNGARKQAEHPNNQSHHNHPHPTSNPNELPKPKR. Positions 31–48 are enriched in low complexity; sequence HPNNQSHHNHPHPTSNPN. The USP domain maps to 78–386; that stretch reads TGMINVGNTC…NAYIMFFELD (309 aa). The active-site Nucleophile is Cys-87. His-345 serves as the catalytic Proton acceptor. Disordered regions lie at residues 393 to 422, 483 to 782, and 868 to 988; these read PPANRPNGVRLTNGHSTTPVPAATVSSPSP, ATSA…VTSN, and EQRQ…QQQT. Low complexity-rich tracts occupy residues 408-422 and 490-509; these read STTPVPAATVSSPSP and NGNKSSSPSSNSSSNHKSIN. Phosphoserine occurs at positions 419 and 421. Polar residues predominate over residues 532 to 544; it reads TTAQLPSMPNMTE. A phosphothreonine mark is found at Thr-561 and Thr-565. Phosphoserine is present on residues Ser-575 and Ser-577. Residues 592–601 show a composition bias toward acidic residues; the sequence is EGEDFSESDQ. Residues 602 to 631 are compositionally biased toward polar residues; that stretch reads ESGQTNGHSKTNGSLTNGSASSSVHVNNSK. Positions 632-649 are enriched in basic and acidic residues; it reads QKTDAIDEIFKSLKKSAD. Position 650 is a phosphoserine (Ser-650). Acidic residues predominate over residues 650-659; it reads SEEDDDEEEP. A compositionally biased stretch (low complexity) spans 669–679; sequence PQKQSQSQSKA. The segment covering 680–689 has biased composition (pro residues); sequence PPSPKTPPSP. At Ser-682 the chain carries Phosphoserine. Phosphothreonine is present on Thr-685. At Ser-688 the chain carries Phosphoserine. Residues 707 to 717 are compositionally biased toward acidic residues; the sequence is VDAIDDDDDAV. Position 728 is a phosphothreonine (Thr-728). Over residues 735–747 the composition is skewed to polar residues; it reads NPFSSSKPSTDSP. Position 746 is a phosphoserine (Ser-746). At Thr-749 the chain carries Phosphothreonine. Polar residues predominate over residues 762–782; it reads ALKSHQQPRVGNGYQSNVTSN. 2 stretches are compositionally biased toward low complexity: residues 892–903 and 930–943; these read SGSAKGNNASNS and RFHNQNYRQNFQQR.

This sequence belongs to the peptidase C19 family. As to quaternary structure, interacts with atms/PAF1, but not with CycT.

The protein localises to the nucleus. Its subcellular location is the nucleolus. It carries out the reaction Thiol-dependent hydrolysis of ester, thioester, amide, peptide and isopeptide bonds formed by the C-terminal Gly of ubiquitin (a 76-residue protein attached to proteins as an intracellular targeting signal).. Required for maintaining multiple types of adult stem cells, including male and female germline, epithelial follicle cell and intestinal stem cells. May function as a transcriptional repressor by continually deubiquiting histone H2B at the promoters of genes critical for cellular differentiation, thereby preventing histone H3 'Lys-4' trimethylation (H3K4). Controls selective autophagy activation by ubiquitinated proteins. This Drosophila simulans (Fruit fly) protein is Ubiquitin carboxyl-terminal hydrolase 36 (Usp36).